Here is a 132-residue protein sequence, read N- to C-terminus: Large-conductance mechanosensitive channel (132 aa).

The next 3 helical transmembrane spans lie at 14-34 (VVDLAVGVVIGAAFGKIVSSL), 38-58 (IITPLLGMVLGGVDFTSLHFG), and 67-87 (GNFIQTIFDFLIIAASIFMFV).

This sequence belongs to the MscL family. As to quaternary structure, homopentamer.

The protein resides in the cell membrane. Its function is as follows. Channel that opens in response to stretch forces in the membrane lipid bilayer. May participate in the regulation of osmotic pressure changes within the cell. The protein is Large-conductance mechanosensitive channel of Bacillus cereus (strain B4264).